The following is a 323-amino-acid chain: Acetyl esterase (323 aa).

An Involved in the stabilization of the negatively charged intermediate by the formation of the oxyanion hole motif is present at residues 91–93; sequence HGG. Active-site residues include Ser-165, Asp-262, and His-292.

It belongs to the 'GDXG' lipolytic enzyme family. As to quaternary structure, homodimer. Interacts with MalT and MelA.

The protein localises to the cytoplasm. Displays esterase activity towards short chain fatty esters (acyl chain length of up to 8 carbons). Able to hydrolyze triacetylglycerol (triacetin) and tributyrylglycerol (tributyrin), but not trioleylglycerol (triolein) or cholesterol oleate. Negatively regulates MalT activity by antagonizing maltotriose binding. Inhibits MelA galactosidase activity. In Salmonella dublin (strain CT_02021853), this protein is Acetyl esterase.